The sequence spans 513 residues: Protein CYCLOPS (513 aa).

Disordered stretches follow at residues 329–380 (QGRT…STQN) and 395–435 (DDRK…AEAK). Residues 333–347 (ASGEPSQSESSAAAP) are compositionally biased toward low complexity. Residues 359-380 (PSNSNQTLGDSSWKQVGESTQN) show a composition bias toward polar residues. 2 short sequence motifs (nuclear localization signal) span residues 397–400 (RKRK) and 421–424 (KKRR). Positions 447–513 (MQAILKRCEN…ERILSETGKI (67 aa)) form a coiled coil.

Belongs to the CYCLOPS family. Forms homodimers. Interacts with CCAMK. In terms of tissue distribution, highly expressed in roots. Expressed in root hairs and nodules. Not detected in leaves or flowers.

The protein localises to the nucleus. Involved symbiotic signaling. Required for root infection by symbiotic rhizobia, infection thread (IT) formation, and nodule development. Required for proper induction of early nodulin gene expression. Probably not involved in nodule organogenesis. Involved in arbuscular mycorrhizal (AM) symbiosis. Required for fungal infection of the outer cortical cell layers, and for arbuscule development during the AM symbiosis. Acts downstream of CCAMK. Required for symbiosome formation (i.e. the release of the bacteria from the ITs) and subsequent symbiosome development. Required for the expression of the nodule-specific RPG gene, which controls proper IT growth and is essential for symbiosome formation. Acts upstream of ERN1, a transcriptional regulator required for nodulation. This is Protein CYCLOPS from Medicago truncatula (Barrel medic).